Consider the following 584-residue polypeptide: Aspartate--tRNA(Asp/Asn) ligase (584 aa).

E174 is a binding site for L-aspartate. The segment at Q198 to K201 is aspartate. R220 is a binding site for L-aspartate. Residues R220 to E222 and Q229 contribute to the ATP site. H447 contributes to the L-aspartate binding site. E480 contributes to the ATP binding site. Residue R487 coordinates L-aspartate. Position 532 to 535 (G532 to R535) interacts with ATP.

The protein belongs to the class-II aminoacyl-tRNA synthetase family. Type 1 subfamily. As to quaternary structure, homodimer.

The protein resides in the cytoplasm. The enzyme catalyses tRNA(Asx) + L-aspartate + ATP = L-aspartyl-tRNA(Asx) + AMP + diphosphate. Its function is as follows. Aspartyl-tRNA synthetase with relaxed tRNA specificity since it is able to aspartylate not only its cognate tRNA(Asp) but also tRNA(Asn). Reaction proceeds in two steps: L-aspartate is first activated by ATP to form Asp-AMP and then transferred to the acceptor end of tRNA(Asp/Asn). This is Aspartate--tRNA(Asp/Asn) ligase from Endomicrobium trichonymphae.